The primary structure comprises 268 residues: Lipopolysaccharide core heptose(I) kinase WaaP (268 aa).

Residues Y30, Y48, and Y98 each carry the phosphotyrosine; by autocatalysis modification. D163 is a catalytic residue. Phosphotyrosine; by autocatalysis is present on residues Y165, Y211, Y231, Y258, and Y264.

This sequence belongs to the protein kinase superfamily. KdkA/RfaP family. In terms of assembly, interacts with acyl-AcpP. The WaaP hydrophobic channel can accommodate acyl chains of different lengths, but myristyl-ACP is likely its physiological binding partner. The cofactor is Mg(2+).

The protein localises to the cytoplasm. The catalysed reaction is an L-alpha-D-Hep-(1-&gt;3)-L-alpha-D-Hep-(1-&gt;5)-[alpha-Kdo-(2-&gt;4)]-alpha-Kdo-(2-&gt;6)-lipid A + ATP = an L-alpha-D-Hep-(1-&gt;3)-4-O-phospho-L-alpha-D-Hep-(1-&gt;5)-[alpha-Kdo-(2-&gt;4)]-alpha-Kdo-(2-&gt;6)-lipid A + ADP + H(+). The enzyme catalyses L-tyrosyl-[protein] + ATP = O-phospho-L-tyrosyl-[protein] + ADP + H(+). Its pathway is bacterial outer membrane biogenesis; LPS core biosynthesis. Acylated-acyl carrier protein (acyl-ACP) acts as a very tightly bound cofactor necessary for the production and stability of active WaaP kinase. Its function is as follows. Kinase involved in the biosynthesis of the core oligosaccharide region of lipopolysaccharide (LPS). Catalyzes the phosphorylation of heptose I (HepI), the first heptose added to the Kdo2-lipid A module. Also has protein-tyrosine kinase activity: autophosphorylates on all Tyr residues; in vitro can phosphorylate poly(Glu,Tyr). This chain is Lipopolysaccharide core heptose(I) kinase WaaP, found in Pseudomonas aeruginosa (strain ATCC 15692 / DSM 22644 / CIP 104116 / JCM 14847 / LMG 12228 / 1C / PRS 101 / PAO1).